Here is a 128-residue protein sequence, read N- to C-terminus: CD59 glycoprotein (128 aa).

Residues 1–25 (MGIQGGSVLFGLLLILAVFCHSGHS) form the signal peptide. One can recognise a UPAR/Ly6 domain in the interval 26-108 (LQCYSCPYST…ILENGGTTLS (83 aa)). Disulfide bonds link C28-C51, C31-C38, C44-C64, C70-C88, and C89-C94. N-linked (GlcNAc...) asparagine glycosylation occurs at N43. N102 is lipidated: GPI-anchor amidated asparagine. Residues 103-128 (GGTTLSKKTVLLLVTPFLAAAWSLHP) constitute a propeptide, removed in mature form.

As to quaternary structure, interacts with T-cell surface antigen CD2. N- and O-glycosylated.

It is found in the cell membrane. Its subcellular location is the secreted. In terms of biological role, potent inhibitor of the complement membrane attack complex (MAC) action, which protects self-cells from damage during complement activation. Acts by binding to the beta-haipins of C8 (C8A and C8B) components of the assembling MAC, forming an intermolecular beta-sheet that prevents incorporation of the multiple copies of C9 required for complete formation of the osmolytic pore. This is CD59 glycoprotein from Callithrix sp. (Marmoset).